A 296-amino-acid chain; its full sequence is D-alanine--D-alanine ligase (296 aa).

In terms of domain architecture, ATP-grasp spans 103 to 293; it reads KEILMHHRMP…FDSFVKRIIE (191 aa). ATP is bound at residue 129 to 180; it reads ISFPVAVKPSSGGSSIATFKVKSIQELKHAYEEASKYGEVMIEQWVTGKEIT. Residues Asp247, Glu260, and Asn262 each contribute to the Mg(2+) site.

This sequence belongs to the D-alanine--D-alanine ligase family. Mg(2+) is required as a cofactor. The cofactor is Mn(2+).

The protein resides in the cytoplasm. The enzyme catalyses 2 D-alanine + ATP = D-alanyl-D-alanine + ADP + phosphate + H(+). Its pathway is cell wall biogenesis; peptidoglycan biosynthesis. In terms of biological role, cell wall formation. This is D-alanine--D-alanine ligase from Francisella tularensis subsp. tularensis (strain FSC 198).